The primary structure comprises 641 residues: Chaperone protein DnaK (641 aa).

Threonine 199 carries the post-translational modification Phosphothreonine; by autocatalysis. The segment covering 603–613 has biased composition (polar residues); that stretch reads YTQQGGTAGSE. The interval 603–641 is disordered; the sequence is YTQQGGTAGSETHSHEKAGGSGGDDVVDAEFEEVRDDKR. Residues 627 to 641 are compositionally biased toward acidic residues; the sequence is DVVDAEFEEVRDDKR.

Belongs to the heat shock protein 70 family.

In terms of biological role, acts as a chaperone. The protein is Chaperone protein DnaK of Methylococcus capsulatus (strain ATCC 33009 / NCIMB 11132 / Bath).